The primary structure comprises 207 residues: Protein GrpE (207 aa).

Basic and acidic residues predominate over residues 1-11 (MTETDGQKDNN). The interval 1 to 39 (MTETDGQKDNNQDTAQAAADPVVSKPYIMPDDPEEGSNE) is disordered.

This sequence belongs to the GrpE family. Homodimer.

It is found in the cytoplasm. Its function is as follows. Participates actively in the response to hyperosmotic and heat shock by preventing the aggregation of stress-denatured proteins, in association with DnaK and GrpE. It is the nucleotide exchange factor for DnaK and may function as a thermosensor. Unfolded proteins bind initially to DnaJ; upon interaction with the DnaJ-bound protein, DnaK hydrolyzes its bound ATP, resulting in the formation of a stable complex. GrpE releases ADP from DnaK; ATP binding to DnaK triggers the release of the substrate protein, thus completing the reaction cycle. Several rounds of ATP-dependent interactions between DnaJ, DnaK and GrpE are required for fully efficient folding. The protein is Protein GrpE of Rhodopseudomonas palustris (strain TIE-1).